The following is a 211-amino-acid chain: MFSYYFQGLALGAAMILPLGPQNAFVMNQGIRRQYHIMIALLCAISDLVLICAGIFGGSALLMQSPWLLALVTWGGVVFLLWYGFGAFKTAMSSNIELASAEVLKQGRWKIIATMLAVTWLNPHVYLDTFVVLGSLGGQLDVEPKRWFALGTISASFLWFFGLAILAAWLAPRLRTAKSQRIINLVVGCVMWFIALQLARDGIAHAQALFS.

The next 6 helical transmembrane spans lie at 1–21 (MFSY…PLGP), 37–57 (IMIA…GIFG), 68–88 (LLAL…FGAF), 111–131 (IIAT…DTFV), 147–167 (WFAL…AILA), and 182–202 (IINL…ARDG).

It belongs to the LysE/ArgO transporter (TC 2.A.75) family.

The protein resides in the cell inner membrane. It carries out the reaction L-arginine(in) = L-arginine(out). Its function is as follows. Involved in the export of arginine. Important to control the intracellular level of arginine and the correct balance between arginine and lysine. The polypeptide is Arginine exporter protein ArgO (Escherichia coli O157:H7).